We begin with the raw amino-acid sequence, 289 residues long: RNA exonuclease 4 (289 aa).

Residues 1 to 24 show a composition bias toward polar residues; the sequence is MALSSNWQALLASESNPTSNGKNK. The disordered stretch occupies residues 1–34; that stretch reads MALSSNWQALLASESNPTSNGKNKQSNRKIRNVK. Basic residues predominate over residues 25-34; sequence QSNRKIRNVK. Positions 121–273 constitute an Exonuclease domain; the sequence is YIAMDCEFVG…EDARATMLLY (153 aa).

This sequence belongs to the REXO4 family.

The protein resides in the nucleus. Functionally, exoribonuclease involved in ribosome biosynthesis. Involved in the processing of ITS1, the internal transcribed spacer localized between the 18S and 5.8S rRNAs. In Saccharomyces cerevisiae (strain ATCC 204508 / S288c) (Baker's yeast), this protein is RNA exonuclease 4 (REX4).